The sequence spans 488 residues: Auxin transporter-like protein 1 (488 aa).

Positions 1-36 (MSGEKQAEESIVVSGEDEVAGRKVEDSAAEEDIDGN) are disordered. The Cytoplasmic portion of the chain corresponds to 1-64 (MSGEKQAEES…DAWFSCASNQ (64 aa)). The helical transmembrane segment at 65–82 (VAQVLLTLPYSFSQLGML) threads the bilayer. Over 83–84 (SG) the chain is Extracellular. The chain crosses the membrane as a helical span at residues 85–105 (ILLQIFYGLMGSWTAYLISVL). At 106-141 (YVEYRARMEKQEAKSFKNHVIQWFEVLDGLLGPYWK) the chain is on the cytoplasmic side. A helical membrane pass occupies residues 142-162 (AAGLAFNCTFLLFGSVIQLIA). Over 163 to 178 (CASNIYYINDRLDKRT) the chain is Extracellular. A helical transmembrane segment spans residues 179–199 (WTYIFGACCATTVFIPSFHNY). At 200–202 (RIW) the chain is on the cytoplasmic side. Residues 203 to 223 (SFLGLGMTTYTAWYLTIASFL) traverse the membrane as a helical segment. The Extracellular portion of the chain corresponds to 224–238 (HGQAEGVTHSGPTKL). A helical transmembrane segment spans residues 239-259 (VLYFTGATNILYTFGGHAVTV). Topologically, residues 260 to 273 (EIMHAMWKPRKFKS) are cytoplasmic. The helical transmembrane segment at 274-294 (IYLMATLYVFTLTLPSASAVY) threads the bilayer. Residues 295-320 (WAFGDQLLNHSNAFSLLPKTRFRDTA) are Extracellular-facing. A glycan (N-linked (GlcNAc...) asparagine) is linked at Asn-303. Residues 321 to 341 (VILMLIHQFITFGFACTPLYF) form a helical membrane-spanning segment. Topologically, residues 342–362 (VWEKAIGMHHTKSLCLRALVR) are cytoplasmic. The helical transmembrane segment at 363–383 (LPVVVPIWFLAIIFPFFGPIN) threads the bilayer. A topological domain (extracellular) is located at residue Ser-384. A helical transmembrane segment spans residues 385-405 (AVGALLVTFTVYIIPALAHML). Residues 406–427 (TYRTASARRNAAEKPPFFIPSW) are Cytoplasmic-facing. The helical transmembrane segment at 428–448 (AGVYVINAFIVVWVLVLGFGF) threads the bilayer. Residues 449–488 (GGWASMTNFIRQIDTFGLFAKCYQCKPPPAPIAAGAHHRR) lie on the Extracellular side of the membrane.

Belongs to the amino acid/polyamine transporter 2 family. Amino acid/auxin permease (AAAP) (TC 2.A.18.1) subfamily.

Its subcellular location is the cell membrane. Carrier protein involved in proton-driven auxin influx. Mediates the formation of auxin gradient from developing leaves (site of auxin biosynthesis) to tips by contributing to the loading of auxin in vascular tissues and facilitating acropetal (base to tip) auxin transport within inner tissues of the root apex, and basipetal (tip to base) auxin transport within outer tissues of the root apex. This chain is Auxin transporter-like protein 1 (LAX1), found in Arabidopsis thaliana (Mouse-ear cress).